Consider the following 129-residue polypeptide: M-zodatoxin-Lt8i (129 aa).

Residues 1–20 (MKYFVVALALVAAFACIAES) form the signal peptide. A propeptide spanning residues 21–60 (KPAESEHELAEVEEENELADLEDAVWLEHLADLSDLEEAR) is cleaved from the precursor.

It belongs to the cationic peptide 06 (cytoinsectotoxin) family. Expressed by the venom gland.

Its subcellular location is the secreted. In terms of biological role, insecticidal, cytolytic and antimicrobial peptide. Forms voltage-dependent, ion-permeable channels in membranes. At high concentration causes cell membrane lysis. The polypeptide is M-zodatoxin-Lt8i (cit 1-6) (Lachesana tarabaevi (Spider)).